The following is a 137-amino-acid chain: Small ribosomal subunit protein uS11 (137 aa).

The segment at 116–137 is disordered; sequence EDVTPIPHDGTRPKGGRRGRRV.

It belongs to the universal ribosomal protein uS11 family. In terms of assembly, part of the 30S ribosomal subunit.

Its function is as follows. Located on the platform of the 30S subunit. The polypeptide is Small ribosomal subunit protein uS11 (Pyrococcus furiosus (strain ATCC 43587 / DSM 3638 / JCM 8422 / Vc1)).